We begin with the raw amino-acid sequence, 493 residues long: Cytochrome P450 710A4 (493 aa).

Residues 5-25 (VSLFASLTPYLVSALLLFLLL) form a helical membrane-spanning segment. Cysteine 435 serves as a coordination point for heme.

Belongs to the cytochrome P450 family. It depends on heme as a cofactor. As to expression, very weak expression in roots and root hairs. Not detected in the root tips.

The protein localises to the membrane. It carries out the reaction 5-dehydroepisterol + NADPH + O2 + H(+) = ergosta-5,7,22,24(28)-tetraen-3beta-ol + NADP(+) + 2 H2O. Its pathway is steroid biosynthesis; sterol biosynthesis. Its function is as follows. Required to form the C-22 double bond in the sterol side chain. Possesses C-22 desaturase activity toward beta-sitosterol and produces stigmasterol. The protein is Cytochrome P450 710A4 of Arabidopsis thaliana (Mouse-ear cress).